We begin with the raw amino-acid sequence, 163 residues long: Peptide methionine sulfoxide reductase MsrA 1 (163 aa).

The active site involves Cys-21.

It belongs to the MsrA Met sulfoxide reductase family.

It catalyses the reaction L-methionyl-[protein] + [thioredoxin]-disulfide + H2O = L-methionyl-(S)-S-oxide-[protein] + [thioredoxin]-dithiol. The catalysed reaction is [thioredoxin]-disulfide + L-methionine + H2O = L-methionine (S)-S-oxide + [thioredoxin]-dithiol. In terms of biological role, has an important function as a repair enzyme for proteins that have been inactivated by oxidation. Catalyzes the reversible oxidation-reduction of methionine sulfoxide in proteins to methionine. The chain is Peptide methionine sulfoxide reductase MsrA 1 (msrA1) from Nostoc sp. (strain PCC 7120 / SAG 25.82 / UTEX 2576).